The chain runs to 199 residues: Probable chemoreceptor glutamine deamidase CheD (199 aa).

It belongs to the CheD family.

The enzyme catalyses L-glutaminyl-[protein] + H2O = L-glutamyl-[protein] + NH4(+). In terms of biological role, probably deamidates glutamine residues to glutamate on methyl-accepting chemotaxis receptors (MCPs), playing an important role in chemotaxis. This is Probable chemoreceptor glutamine deamidase CheD from Cereibacter sphaeroides (strain ATCC 17029 / ATH 2.4.9) (Rhodobacter sphaeroides).